The chain runs to 141 residues: NADH-quinone oxidoreductase subunit A (141 aa).

3 helical membrane-spanning segments follow: residues 24-44 (LLAL…LLLA), 77-97 (VPFY…AFIA), and 106-126 (LGWA…VALI).

It belongs to the complex I subunit 3 family. As to quaternary structure, NDH-1 is composed of 14 different subunits. Subunits NuoA, H, J, K, L, M, N constitute the membrane sector of the complex.

Its subcellular location is the cell inner membrane. It carries out the reaction a quinone + NADH + 5 H(+)(in) = a quinol + NAD(+) + 4 H(+)(out). In terms of biological role, NDH-1 shuttles electrons from NADH, via FMN and iron-sulfur (Fe-S) centers, to quinones in the respiratory chain. The immediate electron acceptor for the enzyme in this species is believed to be ubiquinone. Couples the redox reaction to proton translocation (for every two electrons transferred, four hydrogen ions are translocated across the cytoplasmic membrane), and thus conserves the redox energy in a proton gradient. The sequence is that of NADH-quinone oxidoreductase subunit A from Syntrophotalea carbinolica (strain DSM 2380 / NBRC 103641 / GraBd1) (Pelobacter carbinolicus).